Here is a 347-residue protein sequence, read N- to C-terminus: GTPase Obg (347 aa).

The Obg domain occupies Met1 to Leu159. The interval Asn127 to Pro146 is disordered. Over residues Arg129 to Pro138 the composition is skewed to polar residues. An OBG-type G domain is found at Ala160–Glu334. GTP is bound by residues Gly166–Ser173, Phe191–Tyr195, Asp213–Gly216, Asn284–Asp287, and Ser315–Ala317. Positions 173 and 193 each coordinate Mg(2+).

This sequence belongs to the TRAFAC class OBG-HflX-like GTPase superfamily. OBG GTPase family. As to quaternary structure, monomer. The cofactor is Mg(2+).

It localises to the cytoplasm. In terms of biological role, an essential GTPase which binds GTP, GDP and possibly (p)ppGpp with moderate affinity, with high nucleotide exchange rates and a fairly low GTP hydrolysis rate. Plays a role in control of the cell cycle, stress response, ribosome biogenesis and in those bacteria that undergo differentiation, in morphogenesis control. This Thioalkalivibrio sulfidiphilus (strain HL-EbGR7) protein is GTPase Obg.